Consider the following 231-residue polypeptide: Ribosomal RNA large subunit methyltransferase E (231 aa).

S-adenosyl-L-methionine contacts are provided by G76, W78, D99, D115, and D139. Catalysis depends on K179, which acts as the Proton acceptor.

It belongs to the class I-like SAM-binding methyltransferase superfamily. RNA methyltransferase RlmE family.

Its subcellular location is the cytoplasm. The enzyme catalyses uridine(2552) in 23S rRNA + S-adenosyl-L-methionine = 2'-O-methyluridine(2552) in 23S rRNA + S-adenosyl-L-homocysteine + H(+). Specifically methylates the uridine in position 2552 of 23S rRNA at the 2'-O position of the ribose in the fully assembled 50S ribosomal subunit. This is Ribosomal RNA large subunit methyltransferase E from Bradyrhizobium sp. (strain ORS 278).